The primary structure comprises 371 residues: Fructose-1,6-bisphosphatase class 1 1 (371 aa).

Mg(2+)-binding residues include E115, D134, L136, and D137. Residues 137–140, N228, and 280–282 contribute to the substrate site; these read DGSS and YLY. E300 provides a ligand contact to Mg(2+).

It belongs to the FBPase class 1 family. Homotetramer. It depends on Mg(2+) as a cofactor.

It localises to the cytoplasm. The catalysed reaction is beta-D-fructose 1,6-bisphosphate + H2O = beta-D-fructose 6-phosphate + phosphate. Its pathway is carbohydrate biosynthesis; gluconeogenesis. This chain is Fructose-1,6-bisphosphatase class 1 1, found in Xanthobacter autotrophicus (strain ATCC BAA-1158 / Py2).